The sequence spans 235 residues: Phosphoribosylaminoimidazole-succinocarboxamide synthase (235 aa).

The protein belongs to the SAICAR synthetase family.

It carries out the reaction 5-amino-1-(5-phospho-D-ribosyl)imidazole-4-carboxylate + L-aspartate + ATP = (2S)-2-[5-amino-1-(5-phospho-beta-D-ribosyl)imidazole-4-carboxamido]succinate + ADP + phosphate + 2 H(+). It participates in purine metabolism; IMP biosynthesis via de novo pathway; 5-amino-1-(5-phospho-D-ribosyl)imidazole-4-carboxamide from 5-amino-1-(5-phospho-D-ribosyl)imidazole-4-carboxylate: step 1/2. This chain is Phosphoribosylaminoimidazole-succinocarboxamide synthase, found in Clostridium beijerinckii (strain ATCC 51743 / NCIMB 8052) (Clostridium acetobutylicum).